A 171-amino-acid chain; its full sequence is Probable chemoreceptor glutamine deamidase CheD 1 (171 aa).

Low complexity predominate over residues 1–18 (MTRTTGAAPDRAAPAAGE). The disordered stretch occupies residues 1–23 (MTRTTGAAPDRAAPAAGETPGGG).

The protein belongs to the CheD family.

The catalysed reaction is L-glutaminyl-[protein] + H2O = L-glutamyl-[protein] + NH4(+). Functionally, probably deamidates glutamine residues to glutamate on methyl-accepting chemotaxis receptors (MCPs), playing an important role in chemotaxis. This is Probable chemoreceptor glutamine deamidase CheD 1 from Anaeromyxobacter dehalogenans (strain 2CP-C).